Here is a 222-residue protein sequence, read N- to C-terminus: Protein GrpE (222 aa).

Belongs to the GrpE family. As to quaternary structure, homodimer.

It is found in the cytoplasm. Participates actively in the response to hyperosmotic and heat shock by preventing the aggregation of stress-denatured proteins, in association with DnaK and GrpE. It is the nucleotide exchange factor for DnaK and may function as a thermosensor. Unfolded proteins bind initially to DnaJ; upon interaction with the DnaJ-bound protein, DnaK hydrolyzes its bound ATP, resulting in the formation of a stable complex. GrpE releases ADP from DnaK; ATP binding to DnaK triggers the release of the substrate protein, thus completing the reaction cycle. Several rounds of ATP-dependent interactions between DnaJ, DnaK and GrpE are required for fully efficient folding. The sequence is that of Protein GrpE from Bartonella bacilliformis (strain ATCC 35685 / KC583 / Herrer 020/F12,63).